The primary structure comprises 595 residues: Tectonic-3 (595 aa).

A signal peptide spans 1–22; the sequence is MCTLQLHLLLLVVLMLSETARP. A disordered region spans residues 23 to 62; it reads QPSSTARAFPTSWGLEPVTPEVPTSAPPDSSESPTPWTLS. Over 23–575 the chain is Extracellular; the sequence is QPSSTARAFP…ALSRGASVQK (553 aa). The segment covering 49 to 62 has biased composition (polar residues); sequence PPDSSESPTPWTLS. N-linked (GlcNAc...) asparagine glycans are attached at residues Asn167 and Asn336. The chain crosses the membrane as a helical span at residues 576-594; that stretch reads DSLVLILCVLLLGLLNSQT. Lys595 is a topological domain (cytoplasmic).

It belongs to the tectonic family. Part of the tectonic-like complex (also named B9 complex).

Its subcellular location is the membrane. Functionally, part of the tectonic-like complex which is required for tissue-specific ciliogenesis and may regulate ciliary membrane composition. May be involved in apoptosis regulation. Necessary for signal transduction through the sonic hedgehog (Shh) signaling pathway. This Mus musculus (Mouse) protein is Tectonic-3 (Tctn3).